A 333-amino-acid polypeptide reads, in one-letter code: Holliday junction branch migration complex subunit RuvB (333 aa).

The large ATPase domain (RuvB-L) stretch occupies residues 1–182 (MDERLVSGSA…FGVISRLEYY (182 aa)). Residues leucine 21, arginine 22, glycine 63, lysine 66, threonine 67, threonine 68, 129–131 (EDY), arginine 172, tyrosine 182, and arginine 219 contribute to the ATP site. Threonine 67 lines the Mg(2+) pocket. Residues 183-253 (QVDQLAQIIE…LAVEALERLQ (71 aa)) are small ATPAse domain (RuvB-S). Residues 256 to 333 (RLGLDHIDHK…AHLGMEVPKR (78 aa)) form a head domain (RuvB-H) region. Positions 311 and 316 each coordinate DNA.

This sequence belongs to the RuvB family. Homohexamer. Forms an RuvA(8)-RuvB(12)-Holliday junction (HJ) complex. HJ DNA is sandwiched between 2 RuvA tetramers; dsDNA enters through RuvA and exits via RuvB. An RuvB hexamer assembles on each DNA strand where it exits the tetramer. Each RuvB hexamer is contacted by two RuvA subunits (via domain III) on 2 adjacent RuvB subunits; this complex drives branch migration. In the full resolvosome a probable DNA-RuvA(4)-RuvB(12)-RuvC(2) complex forms which resolves the HJ.

It is found in the cytoplasm. It carries out the reaction ATP + H2O = ADP + phosphate + H(+). Its function is as follows. The RuvA-RuvB-RuvC complex processes Holliday junction (HJ) DNA during genetic recombination and DNA repair, while the RuvA-RuvB complex plays an important role in the rescue of blocked DNA replication forks via replication fork reversal (RFR). RuvA specifically binds to HJ cruciform DNA, conferring on it an open structure. The RuvB hexamer acts as an ATP-dependent pump, pulling dsDNA into and through the RuvAB complex. RuvB forms 2 homohexamers on either side of HJ DNA bound by 1 or 2 RuvA tetramers; 4 subunits per hexamer contact DNA at a time. Coordinated motions by a converter formed by DNA-disengaged RuvB subunits stimulates ATP hydrolysis and nucleotide exchange. Immobilization of the converter enables RuvB to convert the ATP-contained energy into a lever motion, pulling 2 nucleotides of DNA out of the RuvA tetramer per ATP hydrolyzed, thus driving DNA branch migration. The RuvB motors rotate together with the DNA substrate, which together with the progressing nucleotide cycle form the mechanistic basis for DNA recombination by continuous HJ branch migration. Branch migration allows RuvC to scan DNA until it finds its consensus sequence, where it cleaves and resolves cruciform DNA. The chain is Holliday junction branch migration complex subunit RuvB from Geobacillus thermodenitrificans (strain NG80-2).